We begin with the raw amino-acid sequence, 174 residues long: Austinoid biosynthesis clusters protein H (174 aa).

This sequence belongs to the trt14 isomerase family. Homodimer.

Its pathway is secondary metabolite biosynthesis; terpenoid biosynthesis. Functionally, part of the gene cluster B that mediates the biosynthesis of austinol and dehydroaustinol, two fungal meroterpenoids. The first step of the pathway is the synthesis of 3,5-dimethylorsellinic acid by the polyketide synthase ausA. 3,5-dimethylorsellinic acid is then prenylated by the polyprenyl transferase ausN. Further epoxidation by the FAD-dependent monooxygenase ausM and cyclization by the probable terpene cyclase ausL lead to the formation of protoaustinoid A. Protoaustinoid A is then oxidized to spiro-lactone preaustinoid A3 by the combined action of the FAD-binding monooxygenases ausB and ausC, and the dioxygenase ausE. Acid-catalyzed keto-rearrangement and ring contraction of the tetraketide portion of preaustinoid A3 by ausJ lead to the formation of preaustinoid A4. The aldo-keto reductase ausK, with the help of ausH, is involved in the next step by transforming preaustinoid A4 into isoaustinone which is in turn hydroxylated by the P450 monooxygenase ausI to form austinolide. Finally, the cytochrome P450 monooxygenase ausG modifies austinolide to austinol. Austinol can be further modified to dehydroaustinol which forms a diffusible complex with diorcinol that initiates conidiation. Due to genetic rearrangements of the clusters and the subsequent loss of some enzymes, the end products of the Emericella nidulans austinoid biosynthesis clusters are austinol and dehydroaustinol, even if additional enzymes, such as the O-acetyltransferase ausQ and the cytochrome P450 monooxygenase ausR are still functional. The polypeptide is Austinoid biosynthesis clusters protein H (Emericella nidulans (strain FGSC A4 / ATCC 38163 / CBS 112.46 / NRRL 194 / M139) (Aspergillus nidulans)).